The sequence spans 365 residues: Fucose-specific lectin (365 aa).

The signal sequence occupies residues 1–21; that stretch reads MKLLHFTILLQVSLFPASSLA. Repeat copies occupy residues 22–79, 80–141, 142–206, 207–261, 262–309, and 310–365. The 6 X approximate tandem repeats stretch occupies residues 22–365; sequence QAGGNNTEVQ…RRGILAIPPA (344 aa). Asn-26 is a glycosylation site (N-linked (GlcNAc...) asparagine). Residues Arg-51, Glu-63, and Trp-70 each contribute to the beta-L-fucose site. 2 N-linked (GlcNAc...) asparagine glycosylation sites follow: Asn-76 and Asn-85. Beta-L-fucose is bound at residue Arg-111. Residue Asn-118 is glycosylated (N-linked (GlcNAc...) asparagine). Residues Glu-123, Trp-132, Arg-164, Glu-176, Trp-201, and Arg-231 each coordinate beta-L-fucose. The N-linked (GlcNAc...) asparagine glycan is linked to Asn-248. Beta-L-fucose is bound by residues Arg-283, Arg-333, and Glu-347.

This sequence belongs to the fungal fucose-specific lectin family. As to quaternary structure, homodimer.

The protein localises to the secreted. Functionally, probable L-fucose-binding lectin. The sequence is that of Fucose-specific lectin from Arthroderma benhamiae (strain ATCC MYA-4681 / CBS 112371) (Trichophyton mentagrophytes).